We begin with the raw amino-acid sequence, 312 residues long: Bifunctional pinoresinol-lariciresinol reductase (312 aa).

Residues 11–17 (GGTGYIG), arginine 36, and lysine 45 contribute to the NADP(+) site. The Proton acceptor role is filled by lysine 138. Arginine 142 contacts NADP(+). Position 270 (histidine 270) interacts with substrate.

The protein belongs to the NmrA-type oxidoreductase family. Isoflavone reductase subfamily. In terms of assembly, dimer.

The enzyme catalyses (+)-lariciresinol + NADP(+) = (+)-pinoresinol + NADPH + H(+). The catalysed reaction is (-)-secoisolariciresinol + NADP(+) = (+)-lariciresinol + NADPH + H(+). Reductase involved in lignan biosynthesis. Catalyzes the enantioselective sequential conversion of (+)-pinoresinol into (+)-lariciresinol and of (+)-lariciresinol into (-)-secoisolariciresinol. Abstracts the 4R-hydride from the NADPH cofactor during catalysis. The protein is Bifunctional pinoresinol-lariciresinol reductase of Thuja plicata (Western red-cedar).